Reading from the N-terminus, the 203-residue chain is Small ribosomal subunit protein uS4 (203 aa).

Positions arginine 93–valine 156 constitute an S4 RNA-binding domain.

This sequence belongs to the universal ribosomal protein uS4 family. As to quaternary structure, part of the 30S ribosomal subunit. Contacts protein S5. The interaction surface between S4 and S5 is involved in control of translational fidelity.

Its function is as follows. One of the primary rRNA binding proteins, it binds directly to 16S rRNA where it nucleates assembly of the body of the 30S subunit. In terms of biological role, with S5 and S12 plays an important role in translational accuracy. In Streptococcus mutans serotype c (strain ATCC 700610 / UA159), this protein is Small ribosomal subunit protein uS4.